The following is a 188-amino-acid chain: Large ribosomal subunit protein uL5 (188 aa).

It belongs to the universal ribosomal protein uL5 family. As to quaternary structure, part of the 50S ribosomal subunit; part of the 5S rRNA/L5/L18/L25 subcomplex. Contacts the 5S rRNA and the P site tRNA. Forms a bridge to the 30S subunit in the 70S ribosome.

In terms of biological role, this is one of the proteins that bind and probably mediate the attachment of the 5S RNA into the large ribosomal subunit, where it forms part of the central protuberance. In the 70S ribosome it contacts protein S13 of the 30S subunit (bridge B1b), connecting the 2 subunits; this bridge is implicated in subunit movement. Contacts the P site tRNA; the 5S rRNA and some of its associated proteins might help stabilize positioning of ribosome-bound tRNAs. The chain is Large ribosomal subunit protein uL5 from Aquifex aeolicus (strain VF5).